The primary structure comprises 304 residues: DCN1-like protein 3 (304 aa).

2 disordered regions span residues 1–87 (MGQC…EESS) and 284–304 (EVEGRGTLSSGQEGLCPEEQT). Residue Gly2 is the site of N-myristoyl glycine attachment. A DCUN1 domain is found at 86-278 (SSLQRLEELF…LFDTFVEWEM (193 aa)).

Part of a complex containing DCUN1D3, CUL3 and RBX1. Interacts (via the DCUN1 domain) with the unneddylated cullins: interacts with CUL1, CUL2, CUL3, CUL4A, CUL4B and CUL5; these interactions promote the cullin neddylation and the identity of the cullin dictates the affinity of the interaction. Interacts preferentially with CUL3; this interaction triggers the relocalization of CUL3 to the cell membrane where CUL3 is neddylated. Interacts (via DCUN1 domain) with RBX1. May also interact with regulators or subunits of cullin-RING ligases such as RNF7, ELOB and DDB1; these interactions are bridged by cullins. Interacts (via DCUN1 domain) with CAND1; this interaction is bridged by cullins and strongly inhibits cullin neddylation. These CAND-cullin-DCNL complexes can only be neddylated in the presence of a substrate adapter. Interacts (via DCUN1 domain) with the N-terminally acetylated form of UBE2M and UBE2F. Highest levels of expression are in the testis. Very low levels of expression in the heart, brain, skeletal muscle, kidney, liver, spleen, lung and ovary.

It localises to the cell membrane. The protein resides in the cytoplasm. It is found in the nucleus. The protein localises to the perinuclear region. Its function is as follows. Contributes to the neddylation of all cullins by transferring NEDD8 from N-terminally acetylated NEDD8-conjugating E2s enzyme to different cullin C-terminal domain-RBX complexes and may play a role in the cell cycle progression by regulating the SCF ubiquitin E3 ligase complex, after UV damage. At the cell membrane, can promote and as well inhibit cullins neddylation. The polypeptide is DCN1-like protein 3 (Mus musculus (Mouse)).